Consider the following 365-residue polypeptide: Zinc transporter 7 (365 aa).

An N-terminal signal peptide occupies residues 1-26; the sequence is MAYSKACYKLTTITILLLSFTLPSLA. The Extracellular portion of the chain corresponds to 27 to 56; the sequence is GNAENADVSECKAESGDLSCHNNKEAQKLK. A helical transmembrane segment spans residues 57–77; the sequence is IIAIPSILVASMIGVSLPLFS. At 78 to 90 the chain is on the cytoplasmic side; it reads RSIPALGPDREMS. A helical membrane pass occupies residues 91 to 111; it reads VIVKTLASGVILATGFMHVLP. Over 112 to 129 the chain is Extracellular; it reads DSFDDLTSKCLPEDPWQK. The chain crosses the membrane as a helical span at residues 130–150; sequence FPFATFITMISALLVLMIESF. The Cytoplasmic segment spans residues 151 to 210; the sequence is AMCAYARRTSKREGEVVPLENGSNSVDTQNDIQTLENGSSYVEKQEKVNEDKTSELLRNK. Residues 211–231 traverse the membrane as a helical segment; the sequence is VIAQILELGIVVHSVVIGLAM. Residues 232–242 lie on the Extracellular side of the membrane; that stretch reads GASDNKCTVQS. The chain crosses the membrane as a helical span at residues 243-263; sequence LIAALCFHQLFEGMGLGGSIL. Residues 264-272 are Cytoplasmic-facing; sequence QAQFKSKTN. A helical membrane pass occupies residues 273-293; the sequence is WTMVFFFSVTTPFGIVLGMAI. Residues 294–304 lie on the Extracellular side of the membrane; sequence QKIYDETSPTA. A helical transmembrane segment spans residues 305–325; that stretch reads LIVVGVLNACSAGLLIYMALV. Over 326–344 the chain is Cytoplasmic; sequence NLLAHEFFGPKIQGNIKLH. Residues 345–365 traverse the membrane as a helical segment; sequence VLGYVATFTGAAGMSLMAKWA.

This sequence belongs to the ZIP transporter (TC 2.A.5) family.

It localises to the cell membrane. Probably mediates zinc uptake from the rhizosphere. The polypeptide is Zinc transporter 7 (ZIP7) (Arabidopsis thaliana (Mouse-ear cress)).